A 116-amino-acid chain; its full sequence is Iron-sulfur cluster insertion protein ErpA (116 aa).

Iron-sulfur cluster-binding residues include Cys-44, Cys-108, and Cys-110.

This sequence belongs to the HesB/IscA family. As to quaternary structure, homodimer. Requires iron-sulfur cluster as cofactor.

Functionally, required for insertion of 4Fe-4S clusters for at least IspG. In Shewanella amazonensis (strain ATCC BAA-1098 / SB2B), this protein is Iron-sulfur cluster insertion protein ErpA.